The primary structure comprises 388 residues: Diacylglycerol O-acyltransferase 2 (388 aa).

Topologically, residues 1 to 69 (MKTLIAAYSG…NRSKVEKQLQ (69 aa)) are cytoplasmic. A helical membrane pass occupies residues 70-88 (VISVLQWVLSFLVLGVACS). Topologically, residues 89 to 92 (VILM) are lumenal. Residues 93–112 (YTFCTDCWLIAVLYFTWLAF) form a helical membrane-spanning segment. The Cytoplasmic segment spans residues 113–388 (DWNTPKKGGR…LPETEVLEVN (276 aa)).

Belongs to the diacylglycerol acyltransferase family. As to quaternary structure, forms multimeric complexes consisting of several DGAT2 subunits. Interacts with SLC27A1 and this interaction is enhanced in the presence of ZFYVE1. As to expression, predominantly expressed in liver. Also expressed in testis.

It is found in the endoplasmic reticulum membrane. It localises to the lipid droplet. The protein localises to the cytoplasm. The protein resides in the perinuclear region. It catalyses the reaction an acyl-CoA + a 1,2-diacyl-sn-glycerol = a triacyl-sn-glycerol + CoA. The enzyme catalyses all-trans-retinol + an acyl-CoA = an all-trans-retinyl ester + CoA. It carries out the reaction 1,2-di-(9Z-octadecenoyl)-sn-glycerol + hexadecanoyl-CoA = 1,2-di-(9Z)-octadecenoyl-3-hexadecanoyl-sn-glycerol + CoA. The catalysed reaction is 1,2-di-(9Z-octadecenoyl)-sn-glycerol + (9Z)-octadecenoyl-CoA = 1,2,3-tri-(9Z-octadecenoyl)-glycerol + CoA. It catalyses the reaction 1,3-di-(9Z-octadecenoyl)-glycerol + (9Z)-octadecenoyl-CoA = 1,2,3-tri-(9Z-octadecenoyl)-glycerol + CoA. The enzyme catalyses 2,3-di-(9Z)-octadecenoyl-sn-glycerol + (9Z)-octadecenoyl-CoA = 1,2,3-tri-(9Z-octadecenoyl)-glycerol + CoA. It carries out the reaction 2-(9Z-octadecenoyl)-glycerol + hexadecanoyl-CoA = 1-hexadecanoyl-2-(9Z-octadecenoyl)-sn-glycerol + CoA. The catalysed reaction is 2-(9Z-octadecenoyl)-glycerol + (9Z)-octadecenoyl-CoA = 1,2-di-(9Z-octadecenoyl)-sn-glycerol + CoA. It catalyses the reaction all-trans-retinol + hexadecanoyl-CoA = all-trans-retinyl hexadecanoate + CoA. The enzyme catalyses 1-O-(9Z-octadecenyl)-glycerol + (9Z)-octadecenoyl-CoA = 1-O-(9Z-octadecyl)-3-(9Z-octadecenoyl)-glycerol + CoA. It carries out the reaction 1-(9Z-octadecenoyl)-glycerol + (9Z)-octadecenoyl-CoA = 1,2-di-(9Z-octadecenoyl)-glycerol + CoA. It functions in the pathway glycerolipid metabolism; triacylglycerol biosynthesis. Inhibited by niacin. Functionally, essential acyltransferase that catalyzes the terminal and only committed step in triacylglycerol synthesis by using diacylglycerol and fatty acyl CoA as substrates. Required for synthesis and storage of intracellular triglycerides. Probably plays a central role in cytosolic lipid accumulation. In liver, is primarily responsible for incorporating endogenously synthesized fatty acids into triglycerides. Also functions as an acyl-CoA retinol acyltransferase (ARAT). Also able to use 1-monoalkylglycerol (1-MAkG) as an acyl acceptor for the synthesis of monoalkyl-monoacylglycerol (MAMAG). This Mus musculus (Mouse) protein is Diacylglycerol O-acyltransferase 2.